Reading from the N-terminus, the 388-residue chain is Phosphopentomutase (388 aa).

The Mn(2+) site is built by Asp-10, Asp-282, His-287, Asp-323, His-324, and His-335.

This sequence belongs to the phosphopentomutase family. Requires Mn(2+) as cofactor.

Its subcellular location is the cytoplasm. It carries out the reaction 2-deoxy-alpha-D-ribose 1-phosphate = 2-deoxy-D-ribose 5-phosphate. The enzyme catalyses alpha-D-ribose 1-phosphate = D-ribose 5-phosphate. It functions in the pathway carbohydrate degradation; 2-deoxy-D-ribose 1-phosphate degradation; D-glyceraldehyde 3-phosphate and acetaldehyde from 2-deoxy-alpha-D-ribose 1-phosphate: step 1/2. Its function is as follows. Isomerase that catalyzes the conversion of deoxy-ribose 1-phosphate (dRib-1-P) and ribose 1-phosphate (Rib-1-P) to deoxy-ribose 5-phosphate (dRib-5-P) and ribose 5-phosphate (Rib-5-P), respectively. This Desulfitobacterium hafniense (strain DSM 10664 / DCB-2) protein is Phosphopentomutase.